The following is a 390-amino-acid chain: Zinc transporter 7-B (390 aa).

Topologically, residues methionine 1 to asparagine 37 are cytoplasmic. Residues leucine 38–tryptophan 58 traverse the membrane as a helical segment. The Lumenal segment spans residues serine 59–aspartate 67. A helical membrane pass occupies residues serine 68–serine 88. Over arginine 89–arginine 102 the chain is Cytoplasmic. A helical transmembrane segment spans residues alanine 103–phenylalanine 123. Over serine 124 to arginine 140 the chain is Lumenal. The helical transmembrane segment at leucine 141–histidine 161 threads the bilayer. The segment at histidine 161 to histidine 226 is his-rich loop. The Cytoplasmic portion of the chain corresponds to glycine 162–glycine 250. Residues glycine 166–serine 243 form a disordered region. Residues glycine 187–glycine 201 show a composition bias toward basic residues. 2 stretches are compositionally biased toward basic and acidic residues: residues glycine 202 to histidine 218 and cysteine 232 to glycine 242. A helical membrane pass occupies residues valine 251–leucine 271. The Lumenal portion of the chain corresponds to methionine 272–glycine 276. A helical transmembrane segment spans residues leucine 277–isoleucine 297. Over proline 298–methionine 390 the chain is Cytoplasmic.

The protein belongs to the cation diffusion facilitator (CDF) transporter (TC 2.A.4) family. SLC30A subfamily. In terms of assembly, homooligomer.

The protein localises to the golgi apparatus membrane. It localises to the cytoplasmic vesicle. It is found in the golgi apparatus. The protein resides in the trans-Golgi network. Its subcellular location is the sarcoplasmic reticulum. The protein localises to the mitochondrion. It catalyses the reaction Zn(2+)(in) = Zn(2+)(out). Functionally, zinc ion transporter mediating zinc entry from the cytosol into the lumen of organelles along the secretory pathway. By contributing to zinc ion homeostasis within the early secretory pathway, regulates the activation and folding of enzymes like alkaline phosphatases. The sequence is that of Zinc transporter 7-B (slc30a7-b) from Xenopus laevis (African clawed frog).